A 367-amino-acid chain; its full sequence is Peptide chain release factor 2 (367 aa).

Position 250 is an N5-methylglutamine (glutamine 250).

This sequence belongs to the prokaryotic/mitochondrial release factor family. Methylated by PrmC. Methylation increases the termination efficiency of RF2.

The protein localises to the cytoplasm. Peptide chain release factor 2 directs the termination of translation in response to the peptide chain termination codons UGA and UAA. The chain is Peptide chain release factor 2 from Chloroflexus aggregans (strain MD-66 / DSM 9485).